The following is a 105-amino-acid chain: UPF0145 protein VP1283 (105 aa).

It belongs to the UPF0145 family.

This Vibrio parahaemolyticus serotype O3:K6 (strain RIMD 2210633) protein is UPF0145 protein VP1283.